The following is a 187-amino-acid chain: Adenylate kinase (187 aa).

An ATP-binding site is contributed by 10 to 15 (GSGKGT). Residues 30–59 (STGDMLRAEIAAGTELGKQAKTVMDAGNLV) are NMP. Residues threonine 31, arginine 36, 57–59 (NLV), 85–88 (GYPR), and glutamine 92 each bind AMP. Residues 126–136 (GRAKEQGRADD) are LID. Arginine 127 provides a ligand contact to ATP. The AMP site is built by arginine 133 and arginine 144. Glycine 172 is a binding site for ATP.

The protein belongs to the adenylate kinase family. As to quaternary structure, monomer.

The protein localises to the cytoplasm. The enzyme catalyses AMP + ATP = 2 ADP. Its pathway is purine metabolism; AMP biosynthesis via salvage pathway; AMP from ADP: step 1/1. Its function is as follows. Catalyzes the reversible transfer of the terminal phosphate group between ATP and AMP. Plays an important role in cellular energy homeostasis and in adenine nucleotide metabolism. This Stenotrophomonas maltophilia (strain K279a) protein is Adenylate kinase.